A 175-amino-acid chain; its full sequence is Disulfide bond formation protein B (175 aa).

Over Met-1–Ser-13 the chain is Cytoplasmic. The helical transmembrane segment at Trp-14–Tyr-30 threads the bilayer. The Periplasmic portion of the chain corresponds to Phe-31–Leu-48. An intrachain disulfide couples Cys-40 to Cys-43. A helical transmembrane segment spans residues Ala-49–Pro-64. The Cytoplasmic portion of the chain corresponds to Lys-65–Ile-71. Residues Leu-72 to Leu-89 traverse the membrane as a helical segment. Topologically, residues Ala-90 to Glu-144 are periplasmic. Cysteines 104 and 130 form a disulfide. The chain crosses the membrane as a helical span at residues Trp-145–Pro-163. Topologically, residues Ile-164–Lys-175 are cytoplasmic.

The protein belongs to the DsbB family.

The protein resides in the cell inner membrane. Required for disulfide bond formation in some periplasmic proteins. Acts by oxidizing the DsbA protein. This Shewanella sp. (strain ANA-3) protein is Disulfide bond formation protein B.